The sequence spans 328 residues: Integrator complex subunit 12 (328 aa).

The interval 1-45 (MAANIAAAAAAAQEVDPVLKKAIKLLHSSNPTSAAELRLLLDEAL) is sufficient for binding to IntS1 and IntS9 and for 3'-end snRNA processing. A PHD-type zinc finger spans residues 128–185 (DLNCCVCGEMVFTATNRLIECSKCGAMYHQECHKPPITKEEAADDQEQNWQCDTCCNK). Low complexity-rich tracts occupy residues 215–233 (KAKS…NSSS), 241–264 (SSST…SSSS), 274–283 (KSTAASSLSA), and 292–311 (SSGT…SKSS). The segment at 215–328 (KAKSSVASSR…GSSSKRRSKQ (114 aa)) is disordered.

This sequence belongs to the Integrator subunit 12 family. In terms of assembly, belongs to the multiprotein complex Integrator, at least composed of IntS1, IntS2, IntS3, IntS4, omd/IntS5, IntS6, defl/IntS7, IntS8, IntS9, IntS10, IntS11, IntS12, asun/IntS13, IntS14 and IntS15. The core complex associates with protein phosphatase 2A subunits mts/PP2A and Pp2A-29B, to form the Integrator-PP2A (INTAC) complex. Within the complex, interacts with IntS1 and IntS9. Interaction with IntS1 is likely to be important for promoting 3'-end processing of snRNAs.

The protein localises to the nucleus. In terms of biological role, component of the integrator complex, a multiprotein complex that terminates RNA polymerase II (Pol II) transcription in the promoter-proximal region of genes. The integrator complex provides a quality checkpoint during transcription elongation by driving premature transcription termination of transcripts that are unfavorably configured for transcriptional elongation: the complex terminates transcription by (1) catalyzing dephosphorylation of the C-terminal domain (CTD) of Pol II subunit Polr2A/Rbp1 and Spt5, and (2) degrading the exiting nascent RNA transcript via endonuclease activity. The integrator complex is also involved in the 3'-end processing of the U7 snRNA, and also the spliceosomal snRNAs U1, U2, U4 and U5. Required for the normal expression of the Integrator complex component IntS1. The sequence is that of Integrator complex subunit 12 from Drosophila melanogaster (Fruit fly).